Consider the following 65-residue polypeptide: Movement protein TGBp3 (65 aa).

Residues 1 to 6 (MLPKMQ) are Lumenal-facing. The chain crosses the membrane as a helical span at residues 7 to 26 (PSAQCLIVFSLAFVLGWYVL). Residues 27-65 (RPGNTSCVLLITGESVRLVNCELTKDLVEAVLLRPLKHL) lie on the Cytoplasmic side of the membrane.

This sequence belongs to the Tymovirales TGBp3 protein family.

Its subcellular location is the host endoplasmic reticulum membrane. Plays a role in viral cell-to-cell propagation, by facilitating genome transport to neighboring plant cells through plasmosdesmata. May induce the formation of granular vesicles derived from the Endoplasmic reticulum, which align on actin filaments. In Potato virus S (strain Peruvian), this protein is Movement protein TGBp3.